The chain runs to 715 residues: Fatty acid oxidation complex subunit alpha (715 aa).

The interval 1-190 (MTTTSAFMLN…RAGLVDDVVP (190 aa)) is enoyl-CoA hydratase. Positions 306 to 715 (GPLNSVGILG…WTNGETDQGN (410 aa)) are 3-hydroxyacyl-CoA dehydrogenase.

The protein in the N-terminal section; belongs to the enoyl-CoA hydratase/isomerase family. In the central section; belongs to the 3-hydroxyacyl-CoA dehydrogenase family. Heterotetramer of two alpha chains (FadJ) and two beta chains (FadI).

It is found in the cytoplasm. It carries out the reaction a (3S)-3-hydroxyacyl-CoA = a (2E)-enoyl-CoA + H2O. It catalyses the reaction a 4-saturated-(3S)-3-hydroxyacyl-CoA = a (3E)-enoyl-CoA + H2O. The enzyme catalyses a (3S)-3-hydroxyacyl-CoA + NAD(+) = a 3-oxoacyl-CoA + NADH + H(+). The catalysed reaction is (3S)-3-hydroxybutanoyl-CoA = (3R)-3-hydroxybutanoyl-CoA. The protein operates within lipid metabolism; fatty acid beta-oxidation. Its function is as follows. Catalyzes the formation of a hydroxyacyl-CoA by addition of water on enoyl-CoA. Also exhibits 3-hydroxyacyl-CoA epimerase and 3-hydroxyacyl-CoA dehydrogenase activities. This Salmonella schwarzengrund (strain CVM19633) protein is Fatty acid oxidation complex subunit alpha.